The chain runs to 236 residues: DNA repair protein RecO (236 aa).

Belongs to the RecO family.

In terms of biological role, involved in DNA repair and RecF pathway recombination. The polypeptide is DNA repair protein RecO (Stutzerimonas stutzeri (strain A1501) (Pseudomonas stutzeri)).